Consider the following 143-residue polypeptide: Sporulation-specific cell division protein SsgB (143 aa).

This sequence belongs to the SsgA family. In terms of assembly, interacts with SsgA. Interacts with FtsZ (via N-terminus).

Its subcellular location is the cell septum. Involved in sporulation-specific cell division. Required for early stages of sporulation. Important in the process of growth cessation prior to sporulation-specific cell division. Recruits cell division protein FtsZ to the future septum sites and tethers the contractile ring structure (Z ring) to the cytoplasmic membrane during sporulation. Stimulates polymerization and filament length of FtsZ in vitro. The chain is Sporulation-specific cell division protein SsgB from Frankia casuarinae (strain DSM 45818 / CECT 9043 / HFP020203 / CcI3).